A 434-amino-acid polypeptide reads, in one-letter code: D-amino acid dehydrogenase (434 aa).

3-17 (VLVLGSGVIGTTSAW) lines the FAD pocket.

Belongs to the DadA oxidoreductase family. FAD serves as cofactor.

The enzyme catalyses a D-alpha-amino acid + A + H2O = a 2-oxocarboxylate + AH2 + NH4(+). The protein operates within amino-acid degradation; D-alanine degradation; NH(3) and pyruvate from D-alanine: step 1/1. Its function is as follows. Oxidative deamination of D-amino acids. This is D-amino acid dehydrogenase from Stenotrophomonas maltophilia (strain K279a).